Consider the following 51-residue polypeptide: UPF0320 protein YOL166W-A (51 aa).

The protein belongs to the UPF0320 family.

In Saccharomyces cerevisiae (strain ATCC 204508 / S288c) (Baker's yeast), this protein is UPF0320 protein YOL166W-A.